A 310-amino-acid polypeptide reads, in one-letter code: MRNSLYKKNIISINDLQRNELELVLNKSAMLKKTPQPNLLKNKVIASCFFEASTRTRLSFETAIYRLGASIVGFSDGNNISLEKKGETLTDTISVISSYVDAIIIRHPQEGSARLAAEFSNKKPIFNAGDGANQHPTQTLLDLFTIQETQNRLTQLNIAIVGDLKYGRTVHSLTQALAKFKHNKFYFISPDALKMPNYINNMLDKKEIYWKRHNNIEEIISEIDILYMTRIQKERLDSTEYANAKSKFVLRAAILKNARNNMKILHPLPRIDEIDRDVDYTPYAWYFKQAANGIYARQAILSLVLIEKHL.

Residues R55 and T56 each coordinate carbamoyl phosphate. Position 85 (K85) interacts with L-aspartate. Positions 106, 135, and 138 each coordinate carbamoyl phosphate. R168 and R230 together coordinate L-aspartate. Positions 268 and 269 each coordinate carbamoyl phosphate.

This sequence belongs to the aspartate/ornithine carbamoyltransferase superfamily. ATCase family. Heterododecamer (2C3:3R2) of six catalytic PyrB chains organized as two trimers (C3), and six regulatory PyrI chains organized as three dimers (R2).

The catalysed reaction is carbamoyl phosphate + L-aspartate = N-carbamoyl-L-aspartate + phosphate + H(+). Its pathway is pyrimidine metabolism; UMP biosynthesis via de novo pathway; (S)-dihydroorotate from bicarbonate: step 2/3. Its function is as follows. Catalyzes the condensation of carbamoyl phosphate and aspartate to form carbamoyl aspartate and inorganic phosphate, the committed step in the de novo pyrimidine nucleotide biosynthesis pathway. This chain is Aspartate carbamoyltransferase catalytic subunit, found in Buchnera aphidicola subsp. Acyrthosiphon pisum (strain APS) (Acyrthosiphon pisum symbiotic bacterium).